Reading from the N-terminus, the 439-residue chain is Histidinol dehydrogenase (439 aa).

NAD(+)-binding residues include tyrosine 132, glutamine 194, and asparagine 217. Substrate is bound by residues serine 244, glutamine 266, and histidine 269. Glutamine 266 and histidine 269 together coordinate Zn(2+). Residues glutamate 335 and histidine 336 each act as proton acceptor in the active site. Histidine 336, aspartate 369, glutamate 423, and histidine 428 together coordinate substrate. Zn(2+) is bound at residue aspartate 369. Histidine 428 contributes to the Zn(2+) binding site.

The protein belongs to the histidinol dehydrogenase family. It depends on Zn(2+) as a cofactor.

The enzyme catalyses L-histidinol + 2 NAD(+) + H2O = L-histidine + 2 NADH + 3 H(+). The protein operates within amino-acid biosynthesis; L-histidine biosynthesis; L-histidine from 5-phospho-alpha-D-ribose 1-diphosphate: step 9/9. Functionally, catalyzes the sequential NAD-dependent oxidations of L-histidinol to L-histidinaldehyde and then to L-histidine. The polypeptide is Histidinol dehydrogenase (his2) (Schizosaccharomyces pombe (strain 972 / ATCC 24843) (Fission yeast)).